A 266-amino-acid chain; its full sequence is Small ribosomal subunit protein uS3 (266 aa).

One can recognise a KH type-2 domain in the interval 39 to 107 (VREYLKKKLK…PVHVNIEEIR (69 aa)). The tract at residues 218-266 (EVAEDKRPRRNARPGDRRPRRDGEGGAPGARRGAPRRGAGKPEDGKTGE) is disordered. 2 stretches are compositionally biased toward basic and acidic residues: residues 230–241 (RPGDRRPRRDGE) and 257–266 (GKPEDGKTGE).

Belongs to the universal ribosomal protein uS3 family. In terms of assembly, part of the 30S ribosomal subunit. Forms a tight complex with proteins S10 and S14.

Its function is as follows. Binds the lower part of the 30S subunit head. Binds mRNA in the 70S ribosome, positioning it for translation. The polypeptide is Small ribosomal subunit protein uS3 (Burkholderia multivorans (strain ATCC 17616 / 249)).